The primary structure comprises 729 residues: 1,4-alpha-glucan branching enzyme GlgB (729 aa).

Aspartate 408 functions as the Nucleophile in the catalytic mechanism. The active-site Proton donor is the glutamate 461.

The protein belongs to the glycosyl hydrolase 13 family. GlgB subfamily. Monomer.

The enzyme catalyses Transfers a segment of a (1-&gt;4)-alpha-D-glucan chain to a primary hydroxy group in a similar glucan chain.. It participates in glycan biosynthesis; glycogen biosynthesis. Its function is as follows. Catalyzes the formation of the alpha-1,6-glucosidic linkages in glycogen by scission of a 1,4-alpha-linked oligosaccharide from growing alpha-1,4-glucan chains and the subsequent attachment of the oligosaccharide to the alpha-1,6 position. This Vibrio cholerae serotype O1 (strain ATCC 39315 / El Tor Inaba N16961) protein is 1,4-alpha-glucan branching enzyme GlgB.